We begin with the raw amino-acid sequence, 316 residues long: Dehydrogenase/reductase SDR family protein 7-like (316 aa).

The Cytoplasmic segment spans residues 1 to 18 (MFFYKIIYFIGFPYIVLR). A helical; Signal-anchor for type II membrane protein membrane pass occupies residues 19-39 (LIVSIILPIASLYFIYCNFIA). Topologically, residues 40–316 (PKLREKPESS…HKFASSSVKK (277 aa)) are peroxisomal. An NAD(+)-binding site is contributed by 56–80 (IITGASSGIGAELAKKYARLGCKVT). Position 194 (Ser-194) interacts with substrate. Tyr-207 serves as the catalytic Proton acceptor.

This sequence belongs to the short-chain dehydrogenases/reductases (SDR) family.

It is found in the peroxisome membrane. In terms of biological role, putative oxidoreductase. This is Dehydrogenase/reductase SDR family protein 7-like from Dictyostelium discoideum (Social amoeba).